Reading from the N-terminus, the 459-residue chain is MDYLPIFCQLHDKPCLLVGGGEIAERKARLLLDAGAVITVNALDFNDQFRAWEKDAQLTLVHSTFDPALLNEVWLVIAATDNQDVNNHVYASASERRIFCNVVDSPERASFIMPSIIDRSPLMVAVSSGGTAPVLARLLREKLESILPQNLGKLAAFAGELRSRVKIRFCKMSARRRFWEKLFVHDRLAQALASEDRERVQQLTELLFSAPLDDRGEVTLVGAGPGDAGLLTLKGLQHLQQADIVVYDRLVSKEILNLSRRDAERIFVGKASGYHSVPQDQINQLLEEKARAGHRVVRLKGGDPFIFGRGAEELEYLQQAGVPFSVVPGITAASGCSAYSGIPLTHRDHSQGVRLITGHVKHDTDLDWSSLAAEKQTLVFYMGLQQAEHIQNKLIEQQLPETVPVAIIENGTSTKQRVLSGQLSQLGELAQQASSPSLIIIGNVVGLREKLSWFSDQTA.

The interval 1-204 (MDYLPIFCQL…EDRERVQQLT (204 aa)) is precorrin-2 dehydrogenase /sirohydrochlorin ferrochelatase. NAD(+)-binding positions include 22–23 (EI) and 43–44 (LD). Phosphoserine is present on serine 128. Residues 216-459 (GEVTLVGAGP…KLSWFSDQTA (244 aa)) are uroporphyrinogen-III C-methyltransferase. Proline 225 contributes to the S-adenosyl-L-methionine binding site. The Proton acceptor role is filled by aspartate 248. Catalysis depends on lysine 270, which acts as the Proton donor. S-adenosyl-L-methionine is bound by residues 301–303 (GGD), isoleucine 306, 331–332 (TA), methionine 382, and glycine 411.

The protein in the N-terminal section; belongs to the precorrin-2 dehydrogenase / sirohydrochlorin ferrochelatase family. It in the C-terminal section; belongs to the precorrin methyltransferase family.

The enzyme catalyses uroporphyrinogen III + 2 S-adenosyl-L-methionine = precorrin-2 + 2 S-adenosyl-L-homocysteine + H(+). It catalyses the reaction precorrin-2 + NAD(+) = sirohydrochlorin + NADH + 2 H(+). The catalysed reaction is siroheme + 2 H(+) = sirohydrochlorin + Fe(2+). It functions in the pathway cofactor biosynthesis; adenosylcobalamin biosynthesis; precorrin-2 from uroporphyrinogen III: step 1/1. Its pathway is cofactor biosynthesis; adenosylcobalamin biosynthesis; sirohydrochlorin from precorrin-2: step 1/1. It participates in porphyrin-containing compound metabolism; siroheme biosynthesis; precorrin-2 from uroporphyrinogen III: step 1/1. The protein operates within porphyrin-containing compound metabolism; siroheme biosynthesis; siroheme from sirohydrochlorin: step 1/1. It functions in the pathway porphyrin-containing compound metabolism; siroheme biosynthesis; sirohydrochlorin from precorrin-2: step 1/1. Its function is as follows. Multifunctional enzyme that catalyzes the SAM-dependent methylations of uroporphyrinogen III at position C-2 and C-7 to form precorrin-2 via precorrin-1. Then it catalyzes the NAD-dependent ring dehydrogenation of precorrin-2 to yield sirohydrochlorin. Finally, it catalyzes the ferrochelation of sirohydrochlorin to yield siroheme. The chain is Siroheme synthase 2 from Pectobacterium atrosepticum (strain SCRI 1043 / ATCC BAA-672) (Erwinia carotovora subsp. atroseptica).